Consider the following 95-residue polypeptide: Glycophorin-C (95 aa).

Residues 1-25 are Extracellular-facing; sequence MSSPVRTPPPERLEPNPGMSYAVME. Residues 26–46 form a helical; Signal-anchor for type III membrane protein membrane-spanning segment; it reads IAIIAAVITAVALVLVCLLFL. The Cytoplasmic segment spans residues 47 to 95; the sequence is MLRYLYRHKGTYYTNEAKGTEFAESADAALQSDPALQDAGDTSKKEYFI. Residues Ser71, Ser78, and Ser89 each carry the phosphoserine modification.

Belongs to the glycophorin-C family.

It is found in the cell membrane. This Rattus norvegicus (Rat) protein is Glycophorin-C (Gypc).